The following is a 283-amino-acid chain: Bifunctional protein FolD (283 aa).

NADP(+) contacts are provided by residues 163–165, Ser-188, and Ile-229; that span reads GRS.

Belongs to the tetrahydrofolate dehydrogenase/cyclohydrolase family. As to quaternary structure, homodimer.

The enzyme catalyses (6R)-5,10-methylene-5,6,7,8-tetrahydrofolate + NADP(+) = (6R)-5,10-methenyltetrahydrofolate + NADPH. The catalysed reaction is (6R)-5,10-methenyltetrahydrofolate + H2O = (6R)-10-formyltetrahydrofolate + H(+). It functions in the pathway one-carbon metabolism; tetrahydrofolate interconversion. In terms of biological role, catalyzes the oxidation of 5,10-methylenetetrahydrofolate to 5,10-methenyltetrahydrofolate and then the hydrolysis of 5,10-methenyltetrahydrofolate to 10-formyltetrahydrofolate. The chain is Bifunctional protein FolD from Campylobacter fetus subsp. fetus (strain 82-40).